A 458-amino-acid chain; its full sequence is ATP synthase subunit beta (458 aa).

148–155 lines the ATP pocket; sequence GGAGVGKT.

The protein belongs to the ATPase alpha/beta chains family. F-type ATPases have 2 components, CF(1) - the catalytic core - and CF(0) - the membrane proton channel. CF(1) has five subunits: alpha(3), beta(3), gamma(1), delta(1), epsilon(1). CF(0) has three main subunits: a(1), b(2) and c(9-12). The alpha and beta chains form an alternating ring which encloses part of the gamma chain. CF(1) is attached to CF(0) by a central stalk formed by the gamma and epsilon chains, while a peripheral stalk is formed by the delta and b chains.

The protein localises to the cell inner membrane. It carries out the reaction ATP + H2O + 4 H(+)(in) = ADP + phosphate + 5 H(+)(out). In terms of biological role, produces ATP from ADP in the presence of a proton gradient across the membrane. The catalytic sites are hosted primarily by the beta subunits. This is ATP synthase subunit beta from Actinobacillus succinogenes (strain ATCC 55618 / DSM 22257 / CCUG 43843 / 130Z).